The following is an 84-amino-acid chain: Large ribosomal subunit protein uL23 (84 aa).

This sequence belongs to the universal ribosomal protein uL23 family. As to quaternary structure, part of the 50S ribosomal subunit. Contacts protein L29.

Functionally, binds to 23S rRNA. One of the proteins that surrounds the polypeptide exit tunnel on the outside of the ribosome. The sequence is that of Large ribosomal subunit protein uL23 from Halobacterium salinarum (strain ATCC 700922 / JCM 11081 / NRC-1) (Halobacterium halobium).